Reading from the N-terminus, the 506-residue chain is Arabinose import ATP-binding protein AraG (506 aa).

ABC transporter domains are found at residues 10–245 (LEFC…MVGR) and 253–501 (YRSR…MLGN). 42 to 49 (GENGAGKS) contributes to the ATP binding site.

The protein belongs to the ABC transporter superfamily. Arabinose importer (TC 3.A.1.2.2) family. The complex is composed of two ATP-binding proteins (AraG), two transmembrane proteins (AraH) and a solute-binding protein (AraF).

It is found in the cell inner membrane. It catalyses the reaction L-arabinose(out) + ATP + H2O = L-arabinose(in) + ADP + phosphate + H(+). Its function is as follows. Part of the ABC transporter complex AraFGH involved in arabinose import. Responsible for energy coupling to the transport system. The polypeptide is Arabinose import ATP-binding protein AraG (Vibrio parahaemolyticus serotype O3:K6 (strain RIMD 2210633)).